Here is a 295-residue protein sequence, read N- to C-terminus: Ubiquitin-conjugating enzyme E2-34 kDa (295 aa).

Residues 7–169 (TASSLLLRQY…VKMEVERSKQ (163 aa)) form the UBC core domain. The active-site Glycyl thioester intermediate is C95. A disordered region spans residues 185 to 295 (ISQSKLDEPE…EDVERVSKKI (111 aa)). At S186 the chain carries Phosphoserine. Residues 189-200 (KLDEPESNKDMA) are compositionally biased toward basic and acidic residues. Acidic residues-rich tracts occupy residues 207–226 (SDLD…DYDD) and 234–265 (EDDD…DSID). Basic and acidic residues predominate over residues 269–279 (VMDRKQPHKAE). A phosphoserine mark is found at S282 and S292.

This sequence belongs to the ubiquitin-conjugating enzyme family. Interacts with CDC53. Component of the E3 ubiquitin ligase complexes SCF with CDC53, SKP1/CBF3D, HRT1 and some F-box proteins like MET30 and CDC4.

The protein resides in the cytoplasm. It is found in the nucleus. It catalyses the reaction S-ubiquitinyl-[E1 ubiquitin-activating enzyme]-L-cysteine + [E2 ubiquitin-conjugating enzyme]-L-cysteine = [E1 ubiquitin-activating enzyme]-L-cysteine + S-ubiquitinyl-[E2 ubiquitin-conjugating enzyme]-L-cysteine.. It functions in the pathway protein modification; protein ubiquitination. In terms of biological role, catalyzes the covalent attachment of ubiquitin to other proteins. Capable, in vitro, to ubiquitinate histone H2A. Its function is as follows. Mediates the initiation of DNA replication (transition of G1 to S phase in cell cycle). Essential component of the E3 ubiquitin ligase complex SCF (SKP1-CUL1-F-box protein), which mediates the ubiquitination and subsequent proteasomal degradation of target proteins. Involved in the regulation of methionine biosynthesis genes and in the degradation of CDC6 together with CDC4 and CDC53. This chain is Ubiquitin-conjugating enzyme E2-34 kDa (CDC34), found in Saccharomyces cerevisiae (strain ATCC 204508 / S288c) (Baker's yeast).